The sequence spans 302 residues: Sulfate adenylyltransferase subunit 2 (302 aa).

It belongs to the PAPS reductase family. CysD subfamily. In terms of assembly, heterodimer composed of CysD, the smaller subunit, and CysN.

It catalyses the reaction sulfate + ATP + H(+) = adenosine 5'-phosphosulfate + diphosphate. The protein operates within sulfur metabolism; hydrogen sulfide biosynthesis; sulfite from sulfate: step 1/3. Functionally, with CysN forms the ATP sulfurylase (ATPS) that catalyzes the adenylation of sulfate producing adenosine 5'-phosphosulfate (APS) and diphosphate, the first enzymatic step in sulfur assimilation pathway. APS synthesis involves the formation of a high-energy phosphoric-sulfuric acid anhydride bond driven by GTP hydrolysis by CysN coupled to ATP hydrolysis by CysD. The polypeptide is Sulfate adenylyltransferase subunit 2 (Serratia proteamaculans (strain 568)).